A 77-amino-acid polypeptide reads, in one-letter code: U-actitoxin-Avd12a (77 aa).

Positions 1-23 are cleaved as a signal peptide; that stretch reads MALFRMLFLCAVLVLLTSKEGMS. The propeptide occupies 24-29; the sequence is YEEPEN. The 43-residue stretch at 31-73 folds into the EGF-like domain; the sequence is EGVACTGQYAESFCLNGGTCRYIQSIGEYYCICNGDYTGHRCE. Cystine bridges form between C35-C50, C44-C61, and C63-C72.

The protein belongs to the EGF domain peptide family.

It localises to the secreted. Its subcellular location is the nematocyst. Has both toxic and EGF activity. Its EGF activity consists of rounding cells (morphological change) and inducing tyrosine phosphorylation of the EGFR in A431 cells, but with a lower potency that human EGF. The sequence is that of U-actitoxin-Avd12a from Anemonia viridis (Snakelocks anemone).